We begin with the raw amino-acid sequence, 187 residues long: UPF0301 protein plu1183 (187 aa).

Belongs to the UPF0301 (AlgH) family.

The protein is UPF0301 protein plu1183 of Photorhabdus laumondii subsp. laumondii (strain DSM 15139 / CIP 105565 / TT01) (Photorhabdus luminescens subsp. laumondii).